A 229-amino-acid polypeptide reads, in one-letter code: UPF0758 protein Mbar_A2303 (229 aa).

Residues 106–228 enclose the MPN domain; sequence KVCSPKDVYT…YVSLKDEGFV (123 aa). Zn(2+) contacts are provided by histidine 177, histidine 179, and aspartate 190. The JAMM motif signature appears at 177–190; that stretch reads HNHPSGDPSPSRED.

The protein belongs to the UPF0758 family.

In Methanosarcina barkeri (strain Fusaro / DSM 804), this protein is UPF0758 protein Mbar_A2303.